An 84-amino-acid chain; its full sequence is Large ribosomal subunit protein bL27 (84 aa).

The interval 1–21 (MAHKKGAGSTKNGRDSKPKML) is disordered.

This sequence belongs to the bacterial ribosomal protein bL27 family.

In Dehalococcoides mccartyi (strain ATCC BAA-2100 / JCM 16839 / KCTC 5957 / BAV1), this protein is Large ribosomal subunit protein bL27.